The following is a 136-amino-acid chain: Protein NrdI (136 aa).

It belongs to the NrdI family.

In terms of biological role, probably involved in ribonucleotide reductase function. The protein is Protein NrdI of Salmonella paratyphi A (strain ATCC 9150 / SARB42).